Reading from the N-terminus, the 252-residue chain is 5-oxoprolinase subunit A (252 aa).

Belongs to the LamB/PxpA family. As to quaternary structure, forms a complex composed of PxpA, PxpB and PxpC.

It carries out the reaction 5-oxo-L-proline + ATP + 2 H2O = L-glutamate + ADP + phosphate + H(+). Functionally, catalyzes the cleavage of 5-oxoproline to form L-glutamate coupled to the hydrolysis of ATP to ADP and inorganic phosphate. This Bacillus cytotoxicus (strain DSM 22905 / CIP 110041 / 391-98 / NVH 391-98) protein is 5-oxoprolinase subunit A.